An 80-amino-acid polypeptide reads, in one-letter code: UPF0270 protein ASA_3305 (80 aa).

This sequence belongs to the UPF0270 family.

The chain is UPF0270 protein ASA_3305 from Aeromonas salmonicida (strain A449).